A 272-amino-acid polypeptide reads, in one-letter code: 2-succinyl-6-hydroxy-2,4-cyclohexadiene-1-carboxylate synthase (272 aa).

This sequence belongs to the AB hydrolase superfamily. MenH family. In terms of assembly, monomer.

It catalyses the reaction 5-enolpyruvoyl-6-hydroxy-2-succinyl-cyclohex-3-ene-1-carboxylate = (1R,6R)-6-hydroxy-2-succinyl-cyclohexa-2,4-diene-1-carboxylate + pyruvate. The protein operates within quinol/quinone metabolism; 1,4-dihydroxy-2-naphthoate biosynthesis; 1,4-dihydroxy-2-naphthoate from chorismate: step 3/7. Its pathway is quinol/quinone metabolism; menaquinone biosynthesis. Its function is as follows. Catalyzes a proton abstraction reaction that results in 2,5-elimination of pyruvate from 2-succinyl-5-enolpyruvyl-6-hydroxy-3-cyclohexene-1-carboxylate (SEPHCHC) and the formation of 2-succinyl-6-hydroxy-2,4-cyclohexadiene-1-carboxylate (SHCHC). This chain is 2-succinyl-6-hydroxy-2,4-cyclohexadiene-1-carboxylate synthase, found in Yersinia pseudotuberculosis serotype O:1b (strain IP 31758).